The primary structure comprises 40 residues: MITDVQLAIFSNVLGVFLFLLVVAYHYINANTGKSSIKNK.

Residues 1-4 (MITD) are Lumenal-facing. A helical membrane pass occupies residues 5-25 (VQLAIFSNVLGVFLFLLVVAY). Topologically, residues 26-40 (HYINANTGKSSIKNK) are cytoplasmic.

Belongs to the OST4 family. In terms of assembly, component of the oligosaccharyltransferase (OST) complex.

It is found in the endoplasmic reticulum membrane. Functionally, subunit of the oligosaccharyl transferase (OST) complex that catalyzes the initial transfer of a defined glycan (Glc(3)Man(9)GlcNAc(2) in eukaryotes) from the lipid carrier dolichol-pyrophosphate to an asparagine residue within an Asn-X-Ser/Thr consensus motif in nascent polypeptide chains, the first step in protein N-glycosylation. N-glycosylation occurs cotranslationally and the complex associates with the Sec61 complex at the channel-forming translocon complex that mediates protein translocation across the endoplasmic reticulum (ER). All subunits are required for a maximal enzyme activity. This chain is Dolichyl-diphosphooligosaccharide--protein glycosyltransferase subunit 4, found in Drosophila mojavensis (Fruit fly).